The sequence spans 31 residues: IKFEPPLPPKKAHKKFWEDDGIYYPPNHNFP.

This sequence belongs to the flavin monoamine oxidase family. FIG1 subfamily. Homodimer; non-covalently linked. Requires FAD as cofactor. Post-translationally, N-glycosylated. Expressed by the venom gland.

The protein localises to the secreted. It catalyses the reaction an L-alpha-amino acid + O2 + H2O = a 2-oxocarboxylate + H2O2 + NH4(+). The catalysed reaction is L-leucine + O2 + H2O = 4-methyl-2-oxopentanoate + H2O2 + NH4(+). It carries out the reaction L-phenylalanine + O2 + H2O = 3-phenylpyruvate + H2O2 + NH4(+). The enzyme catalyses L-histidine + O2 + H2O = 3-(imidazol-5-yl)pyruvate + H2O2 + NH4(+). Catalyzes an oxidative deamination of predominantly hydrophobic and aromatic L-amino acids, thus producing hydrogen peroxide that may contribute to the diverse toxic effects of this enzyme. Is moderately active on L-Leu, L-His, and L-Phe, and very weakly active on L-Thr, and L-Cys. Exhibits diverse biological activities, such as hemorrhage, hemolysis, edema, antibacterial and antiparasitic activities, as well as regulation of platelet aggregation. Its effect on platelets is controversial, since it either induces aggregation or inhibits agonist-induced aggregation. These different effects are probably due to different experimental conditions. Inhibits growth of B.subtilis strain ATCC 6633 (MIC=32 uM), E.faecalis strain ATCC 12953 (MIC=32 uM), S.aureus strain ATCC 29213 (MIC=32 uM), S.pyogenes strain ATCC 19615 (MIC=8 uM), E.coli strain ATCC 8739 (MIC=4 uM), K.pneumoniae strain ATCC 13885 (MIC=2 uM), P.mirabilis strain ATCC 25933 (MIC=2 uM), P.aeruginosa strain ATCC 15442 (MIC=8 uM) and S.typhimurium strain ATCC 14028 (MIC=8 uM). This Bothrops mattogrossensis (Pitviper) protein is L-amino-acid oxidase.